A 629-amino-acid chain; its full sequence is G1-specific transcription factors activator MSA1 (629 aa).

Residues 1 to 11 (MDKSMIKKRGR) show a composition bias toward basic residues. Disordered regions lie at residues 1–60 (MDKS…KRRL), 83–106 (STPT…NDSY), 217–286 (YCDT…SSLQ), 455–485 (VQVQ…NMNS), and 586–629 (PNLH…IDDQ). Residues 21–37 (PLQSPMAHSSMQVQKQG) are compositionally biased toward polar residues. Over residues 245-260 (IETSASPIGSARNNNI) the composition is skewed to polar residues. Composition is skewed to low complexity over residues 261-277 (LLSQ…QLKP) and 455-475 (VQVQ…RQFQ). Position 268 is a phosphoserine (Ser268). Positions 614 to 629 (KQDDARTALKRLIDDQ) are enriched in basic and acidic residues.

Interacts with transcription complexes SCB-binding factor (SBF) and MCB-binding factor (MBF) at their target promoters. Interacts with MBP1 and SWI6. Phosphorylated by CDC28.

Activator of G1-specific transcription factors, MBF and SBF. Promotes both the timing of G1-specific gene transcription and cell cycle initiation. Associates with SBF- and MBF-regulated target promoters and this binding is maximal during the G1 phase, prior to maximum budding. Affects cell cycle initiation by advancing the timing of transcription of G1-specific genes. Overexpression advances the timing of SBF-dependent transcription and budding. Depletion delays both indicators of cell cycle initiation. In Saccharomyces cerevisiae (strain ATCC 204508 / S288c) (Baker's yeast), this protein is G1-specific transcription factors activator MSA1 (MSA1).